The sequence spans 153 residues: HTH-type transcriptional regulator Zrp (153 aa).

In terms of domain architecture, HTH asnC-type spans 2–63; that stretch reads IDYRDRHILS…LLDRKKINLP (62 aa). The H-T-H motif DNA-binding region spans 21–40; sequence LAEIAERVALSVSACSRRVA.

The chain is HTH-type transcriptional regulator Zrp (zrp) from Zymomonas mobilis subsp. mobilis (strain ATCC 10988 / DSM 424 / LMG 404 / NCIMB 8938 / NRRL B-806 / ZM1).